The sequence spans 258 residues: Coiled-coil domain-containing protein 107 (258 aa).

Positions 1–24 (MASVVSLAGTLGLLLVSALPEVLG) are cleaved as a signal peptide. Basic and acidic residues predominate over residues 25–35 (DRRSPDRRAHP). Positions 25–63 (DRRSPDRRAHPGDAGQVGPAAAEPRRQSPPSKNQRERAR) are disordered. The helical transmembrane segment at 66–86 (ALPLGALYTAAAVAFVLYKCL) threads the bilayer. Residues 106-134 (LQSEQHLAQLTQQLVQTEQHLNSLMAQLD) adopt a coiled-coil conformation. Residues 203–222 (EPLNWNTGTRNLTPPREMQP) form a disordered region.

It is found in the membrane. The sequence is that of Coiled-coil domain-containing protein 107 (CCDC107) from Bos taurus (Bovine).